The chain runs to 520 residues: Succinyl-CoA:3-ketoacid coenzyme A transferase 2A, mitochondrial (520 aa).

Residues 1 to 39 constitute a mitochondrion transit peptide; sequence MAALRLLAWALPRGVSALRPPPALPHRLIRRYVSDRSGS. The interval 280-299 is disordered; that stretch reads ERLTTRDSKPAPGSKDNDPS. Glu342 (5-glutamyl coenzyme A thioester intermediate) is an active-site residue.

The protein belongs to the 3-oxoacid CoA-transferase family. Homodimer.

It is found in the mitochondrion. It catalyses the reaction a 3-oxo acid + succinyl-CoA = a 3-oxoacyl-CoA + succinate. It participates in ketone metabolism; succinyl-CoA degradation; acetoacetyl-CoA from succinyl-CoA: step 1/1. Its function is as follows. Key enzyme for ketone body catabolism. Transfers the CoA moiety from succinate to acetoacetate. Formation of the enzyme-CoA intermediate proceeds via an unstable anhydride species formed between the carboxylate groups of the enzyme and substrate. Probably play and important roles in the energy metabolism of spermatozoa. The sequence is that of Succinyl-CoA:3-ketoacid coenzyme A transferase 2A, mitochondrial (Oxct2a) from Mus musculus (Mouse).